A 100-amino-acid chain; its full sequence is MLALNNYLIISAILFSIGTIGVLVRRNAIVIFMCVEMMLNAVNLTFIAFSKYLGNIDGQIFVFFVMTVAAAEAAVGLALMIAFFKNRESIDVEDVNIMKW.

The next 3 helical transmembrane spans lie at 4–24, 29–49, and 60–80; these read LNNY…GVLV, IVIF…FIAF, and IFVF…LALM.

Belongs to the complex I subunit 4L family. In terms of assembly, NDH-1 is composed of 14 different subunits. Subunits NuoA, H, J, K, L, M, N constitute the membrane sector of the complex.

It localises to the cell inner membrane. The catalysed reaction is a quinone + NADH + 5 H(+)(in) = a quinol + NAD(+) + 4 H(+)(out). NDH-1 shuttles electrons from NADH, via FMN and iron-sulfur (Fe-S) centers, to quinones in the respiratory chain. The immediate electron acceptor for the enzyme in this species is believed to be ubiquinone. Couples the redox reaction to proton translocation (for every two electrons transferred, four hydrogen ions are translocated across the cytoplasmic membrane), and thus conserves the redox energy in a proton gradient. This chain is NADH-quinone oxidoreductase subunit K 1, found in Geotalea daltonii (strain DSM 22248 / JCM 15807 / FRC-32) (Geobacter daltonii).